The sequence spans 400 residues: CCA-adding enzyme (400 aa).

ATP contacts are provided by Gly-28 and Arg-31. Residues Gly-28 and Arg-31 each contribute to the CTP site. Mg(2+)-binding residues include Asp-41 and Asp-43. Positions 112, 155, 158, 161, and 164 each coordinate ATP. CTP contacts are provided by Arg-112, Asp-155, Arg-158, Arg-161, and Arg-164.

This sequence belongs to the tRNA nucleotidyltransferase/poly(A) polymerase family. Bacterial CCA-adding enzyme type 3 subfamily. As to quaternary structure, homodimer. Requires Mg(2+) as cofactor.

The catalysed reaction is a tRNA precursor + 2 CTP + ATP = a tRNA with a 3' CCA end + 3 diphosphate. It carries out the reaction a tRNA with a 3' CCA end + 2 CTP + ATP = a tRNA with a 3' CCACCA end + 3 diphosphate. Functionally, catalyzes the addition and repair of the essential 3'-terminal CCA sequence in tRNAs without using a nucleic acid template. Adds these three nucleotides in the order of C, C, and A to the tRNA nucleotide-73, using CTP and ATP as substrates and producing inorganic pyrophosphate. tRNA 3'-terminal CCA addition is required both for tRNA processing and repair. Also involved in tRNA surveillance by mediating tandem CCA addition to generate a CCACCA at the 3' terminus of unstable tRNAs. While stable tRNAs receive only 3'-terminal CCA, unstable tRNAs are marked with CCACCA and rapidly degraded. This is CCA-adding enzyme from Staphylococcus epidermidis (strain ATCC 12228 / FDA PCI 1200).